The chain runs to 262 residues: Zinc finger protein 138 (262 aa).

A C2H2-type 1 zinc finger spans residues 110–132 (FRCKECDKSLCMLSRLTQHKKIH). The C2H2-type 2; degenerate zinc finger occupies 138–160 (YKCEECGKTFNWSTNLSKPKKIH). The segment at 166–188 (YKCEVCGKAFHQSSILTKHKIIR) adopts a C2H2-type 3; degenerate zinc-finger fold. The C2H2-type 4 zinc finger occupies 194–216 (YKCAHCGKAFKQSSHLTRHKIIH). A C2H2-type 5; degenerate zinc finger spans residues 222 to 244 (YKCEQCGKVFKQSPTLTKHQIIY). A C2H2-type 6; degenerate zinc finger spans residues 250-262 (YKCEECGKAFNLS).

Belongs to the krueppel C2H2-type zinc-finger protein family.

The protein localises to the nucleus. May be involved in transcriptional regulation as a repressor. This is Zinc finger protein 138 (ZNF138) from Homo sapiens (Human).